Consider the following 437-residue polypeptide: Cysteine--tRNA ligase (437 aa).

Cys-31 contributes to the Zn(2+) binding site. The short motif at 33-43 (PTVYNDLHLGN) is the 'HIGH' region element. Zn(2+)-binding residues include Cys-205, His-230, and Glu-234. The 'KMSKS' region signature appears at 262–266 (KMSKS). Lys-265 is an ATP binding site.

It belongs to the class-I aminoacyl-tRNA synthetase family. In terms of assembly, monomer. Requires Zn(2+) as cofactor.

Its subcellular location is the cytoplasm. It carries out the reaction tRNA(Cys) + L-cysteine + ATP = L-cysteinyl-tRNA(Cys) + AMP + diphosphate. The polypeptide is Cysteine--tRNA ligase (cysS) (Mycoplasma pneumoniae (strain ATCC 29342 / M129 / Subtype 1) (Mycoplasmoides pneumoniae)).